The sequence spans 222 residues: Putative thymidylate synthase (222 aa).

The active site involves Cys146.

It belongs to the thymidylate synthase family. Archaeal-type ThyA subfamily. Monomer.

Its subcellular location is the cytoplasm. The protein operates within pyrimidine metabolism; dTTP biosynthesis. In terms of biological role, may catalyze the biosynthesis of dTMP using an unknown cosubstrate. In Methanothermobacter thermautotrophicus (strain ATCC 29096 / DSM 1053 / JCM 10044 / NBRC 100330 / Delta H) (Methanobacterium thermoautotrophicum), this protein is Putative thymidylate synthase.